The chain runs to 979 residues: Collagen alpha-2(I) chain (979 aa).

A disordered region spans residues 1 to 979 (SGGFDFSFLP…FGYEGDFYRA (979 aa)). P10, P13, P35, and P41 each carry 4-hydroxyproline. Residues 28–41 (LMGPRGPPGASGAP) show a composition bias toward low complexity. K88 carries the 5-hydroxylysine; alternate modification. K88 is a glycosylation site (O-linked (Gal...) hydroxylysine; alternate). Residues 128–157 (VGAPGPAGARGSDGSVGPVGPAGPIGSAGP) are compositionally biased toward low complexity. The segment covering 256-265 (GESGGKGEPG) has biased composition (gly residues). Positions 266–276 (SAGPQGPPGSS) are enriched in low complexity. Gly residues predominate over residues 298–307 (GLRGGPGSRG). 4-hydroxyproline occurs at positions 341 and 344. Positions 434–443 (GVQGGKGEQG) are enriched in gly residues. Low complexity-rich tracts occupy residues 490–507 (PGES…SRGP) and 519–529 (EPGVVGAPGTA). The span at 530 to 548 (GPAGSGGPGERGAAGIPGG) shows a compositional bias: gly residues. 2 stretches are compositionally biased toward low complexity: residues 570–599 (RGAP…PRGS) and 606–626 (VGPA…QPGA). Residues 627–636 (KGERGTKGPK) are compositionally biased toward basic and acidic residues. A compositionally biased stretch (low complexity) spans 644 to 654 (PTGPVGSAGPA). Positions 664–673 (GSRGDGGPPG) are enriched in gly residues. The span at 675-684 (TGFPGAAGRT) shows a compositional bias: low complexity. Over residues 721–730 (GETGAGGPPG) the composition is skewed to gly residues. 2 stretches are compositionally biased toward low complexity: residues 738 to 765 (SGEP…LGLP) and 773 to 783 (LPGVAGAVGEP). Residues 784-802 (GPLGIGPPGARGPSGGDGL) show a composition bias toward gly residues. Composition is skewed to low complexity over residues 811–833 (YAGN…VGPA) and 841–856 (EPGP…ALGP). Residues 866 to 877 (RGDKGEPGDKGP) show a composition bias toward basic and acidic residues. Pro residues predominate over residues 951–961 (GPGPPGPPGPP).

Belongs to the fibrillar collagen family. As to quaternary structure, trimers of one alpha 2(I) and two alpha 1(I) chains. Interacts (via C-terminus) with TMEM131 (via PapD-L domain); the interaction is direct and is involved in assembly and TRAPPIII ER-to-Golgi transport complex-dependent secretion of collagen. In terms of processing, prolines at the third position of the tripeptide repeating unit (G-X-Y) are hydroxylated in some or all of the chains. In terms of tissue distribution, expressed in bones.

The protein localises to the secreted. Its subcellular location is the extracellular space. It localises to the extracellular matrix. Its function is as follows. Type I collagen is a member of group I collagen (fibrillar forming collagen). The sequence is that of Collagen alpha-2(I) chain from Neocnus dousman (Slow ground sloth).